The sequence spans 396 residues: Elongation factor Tu 1 (396 aa).

A tr-type G domain is found at 10–206 (KPHVNVGTIG…QIDSYIPEPE (197 aa)). The tract at residues 19–26 (GHIDHGKT) is G1. GTP is bound at residue 19-26 (GHIDHGKT). Mg(2+) is bound at residue Thr-26. The segment at 60–64 (GITIA) is G2. The segment at 81–84 (DCPG) is G3. Residues 81-85 (DCPGH) and 136-139 (NKCD) contribute to the GTP site. The tract at residues 136 to 139 (NKCD) is G4. Positions 174–176 (SAL) are G5.

It belongs to the TRAFAC class translation factor GTPase superfamily. Classic translation factor GTPase family. EF-Tu/EF-1A subfamily. As to quaternary structure, monomer.

The protein localises to the cytoplasm. The enzyme catalyses GTP + H2O = GDP + phosphate + H(+). Its function is as follows. GTP hydrolase that promotes the GTP-dependent binding of aminoacyl-tRNA to the A-site of ribosomes during protein biosynthesis. The chain is Elongation factor Tu 1 from Desulfotalea psychrophila (strain LSv54 / DSM 12343).